A 270-amino-acid polypeptide reads, in one-letter code: MRLIPLANASDVGKWSAHYIVSKINAFNPTAEHPFILGLPTGSTPLATYKELIALHKAGKVSFKYVVTFNMDEYVGITENHPQSYHHFMHQNFLDHIDIPKENINLLNGNASDVETECQRYEDKIKSYGQIHLFMGGVGNDGHIAFNEPASSLTSRTRIKTLTVETRTANSRFFDNDINQVPKYALTVGVGTLMDAEEIMILATGLNKAQAIQAAIEGNVNHMWTISCLQMHPKSIIVCDEPATMELKVKTVKYFHQLEADIIGEFASKK.

Residue Asp-72 is the Proton acceptor; for enolization step of the active site. Residue Asp-141 is the For ring-opening step of the active site. His-143 functions as the Proton acceptor; for ring-opening step in the catalytic mechanism. Glu-148 functions as the For ring-opening step in the catalytic mechanism.

It belongs to the glucosamine/galactosamine-6-phosphate isomerase family. NagB subfamily. As to quaternary structure, homohexamer.

It catalyses the reaction alpha-D-glucosamine 6-phosphate + H2O = beta-D-fructose 6-phosphate + NH4(+). Its pathway is amino-sugar metabolism; N-acetylneuraminate degradation; D-fructose 6-phosphate from N-acetylneuraminate: step 5/5. Allosterically activated by N-acetylglucosamine 6-phosphate (GlcNAc6P). Catalyzes the reversible isomerization-deamination of glucosamine 6-phosphate (GlcN6P) to form fructose 6-phosphate (Fru6P) and ammonium ion. The sequence is that of Glucosamine-6-phosphate deaminase from Photorhabdus laumondii subsp. laumondii (strain DSM 15139 / CIP 105565 / TT01) (Photorhabdus luminescens subsp. laumondii).